The sequence spans 335 residues: Glyceraldehyde-3-phosphate dehydrogenase (335 aa).

NAD(+) contacts are provided by residues 12 to 13 (RI), D34, R78, and S120. Residues 151 to 153 (SCT) and T182 each bind D-glyceraldehyde 3-phosphate. C152 (nucleophile) is an active-site residue. NAD(+) is bound at residue N183. D-glyceraldehyde 3-phosphate contacts are provided by residues R197, 210-211 (TG), and R233. Residue N315 coordinates NAD(+).

The protein belongs to the glyceraldehyde-3-phosphate dehydrogenase family. As to quaternary structure, homotetramer.

The protein resides in the cytoplasm. The enzyme catalyses D-glyceraldehyde 3-phosphate + phosphate + NAD(+) = (2R)-3-phospho-glyceroyl phosphate + NADH + H(+). Its pathway is carbohydrate degradation; glycolysis; pyruvate from D-glyceraldehyde 3-phosphate: step 1/5. Its function is as follows. Catalyzes the oxidative phosphorylation of glyceraldehyde 3-phosphate (G3P) to 1,3-bisphosphoglycerate (BPG) using the cofactor NAD. The first reaction step involves the formation of a hemiacetal intermediate between G3P and a cysteine residue, and this hemiacetal intermediate is then oxidized to a thioester, with concomitant reduction of NAD to NADH. The reduced NADH is then exchanged with the second NAD, and the thioester is attacked by a nucleophilic inorganic phosphate to produce BPG. The polypeptide is Glyceraldehyde-3-phosphate dehydrogenase (gap) (Priestia megaterium (strain DSM 319 / IMG 1521) (Bacillus megaterium)).